The sequence spans 148 residues: uncharacterized protein (148 aa).

Residues 1–35 (MRCVTRTRNWWRRAARMPRAGSSAWWVAVCKQVCT) form the signal peptide.

It is found in the secreted. This is an uncharacterized protein from Homo sapiens (Human).